Consider the following 706-residue polypeptide: Ribosomal RNA large subunit methyltransferase K/L (706 aa).

Positions 43-154 (LMYQSLLWSR…RDMASVALDL (112 aa)) constitute a THUMP domain.

Belongs to the methyltransferase superfamily. RlmKL family.

It is found in the cytoplasm. It carries out the reaction guanosine(2445) in 23S rRNA + S-adenosyl-L-methionine = N(2)-methylguanosine(2445) in 23S rRNA + S-adenosyl-L-homocysteine + H(+). It catalyses the reaction guanosine(2069) in 23S rRNA + S-adenosyl-L-methionine = N(2)-methylguanosine(2069) in 23S rRNA + S-adenosyl-L-homocysteine + H(+). In terms of biological role, specifically methylates the guanine in position 2445 (m2G2445) and the guanine in position 2069 (m7G2069) of 23S rRNA. The chain is Ribosomal RNA large subunit methyltransferase K/L from Yersinia enterocolitica serotype O:8 / biotype 1B (strain NCTC 13174 / 8081).